Consider the following 498-residue polypeptide: DEAD-box ATP-dependent RNA helicase 6 (498 aa).

The tract at residues 1–109 (MDPRARYPPG…WKAQLKLPPQ (109 aa)) is disordered. Basic residues predominate over residues 33–49 (QHQHQHQQPPHPHHHQY). 2 stretches are compositionally biased toward low complexity: residues 50–61 (VQRQPQPQQTPH) and 75–86 (AAEAAGASEQKA). Positions 124-152 (NEFEDYFLKRELLMGIYEKGFERPSPIQE) match the Q motif motif. Residues 155-325 (IPIALTGSDI…DKYLPKPYVI (171 aa)) form the Helicase ATP-binding domain. 168 to 175 (AKNGTGKT) is an ATP binding site. Positions 273–276 (DEAD) match the DEAD box motif. The region spanning 335–495 (GITQFYAFVE…PIPPQIDRAI (161 aa)) is the Helicase C-terminal domain.

It belongs to the DEAD box helicase family. DDX6/DHH1 subfamily.

It localises to the cytoplasm. The protein localises to the P-body. The enzyme catalyses ATP + H2O = ADP + phosphate + H(+). ATP-dependent RNA helicase involved in mRNA turnover, and more specifically in mRNA decapping. This chain is DEAD-box ATP-dependent RNA helicase 6, found in Oryza sativa subsp. japonica (Rice).